The chain runs to 346 residues: Phosphoribosylformylglycinamidine cyclo-ligase (346 aa).

It belongs to the AIR synthase family.

The protein resides in the cytoplasm. The enzyme catalyses 2-formamido-N(1)-(5-O-phospho-beta-D-ribosyl)acetamidine + ATP = 5-amino-1-(5-phospho-beta-D-ribosyl)imidazole + ADP + phosphate + H(+). The protein operates within purine metabolism; IMP biosynthesis via de novo pathway; 5-amino-1-(5-phospho-D-ribosyl)imidazole from N(2)-formyl-N(1)-(5-phospho-D-ribosyl)glycinamide: step 2/2. The chain is Phosphoribosylformylglycinamidine cyclo-ligase from Colwellia psychrerythraea (strain 34H / ATCC BAA-681) (Vibrio psychroerythus).